A 184-amino-acid chain; its full sequence is Bifunctional protein PyrR (184 aa).

A PRPP-binding motif is present at residues 98–110 (VVLVDDVLYTGRT).

This sequence belongs to the purine/pyrimidine phosphoribosyltransferase family. PyrR subfamily.

It carries out the reaction UMP + diphosphate = 5-phospho-alpha-D-ribose 1-diphosphate + uracil. Functionally, regulates the transcription of the pyrimidine nucleotide (pyr) operon in response to exogenous pyrimidines. Its function is as follows. Also displays a weak uracil phosphoribosyltransferase activity which is not physiologically significant. The sequence is that of Bifunctional protein PyrR from Roseiflexus castenholzii (strain DSM 13941 / HLO8).